We begin with the raw amino-acid sequence, 209 residues long: Small ribosomal subunit protein uS4 (209 aa).

The disordered stretch occupies residues 23–46 (SRNPLLKKPHPPGQHGMQRKKKSD). In terms of domain architecture, S4 RNA-binding spans 93–156 (CRLDNMVYRM…RKLQSVQESL (64 aa)).

The protein belongs to the universal ribosomal protein uS4 family. As to quaternary structure, part of the 30S ribosomal subunit. Contacts protein S5. The interaction surface between S4 and S5 is involved in control of translational fidelity.

Its function is as follows. One of the primary rRNA binding proteins, it binds directly to 16S rRNA where it nucleates assembly of the body of the 30S subunit. In terms of biological role, with S5 and S12 plays an important role in translational accuracy. This is Small ribosomal subunit protein uS4 from Chlamydia caviae (strain ATCC VR-813 / DSM 19441 / 03DC25 / GPIC) (Chlamydophila caviae).